Reading from the N-terminus, the 367-residue chain is tRNA-specific 2-thiouridylase MnmA (367 aa).

Residues 11-18 and Met37 contribute to the ATP site; that span reads AMSGGVDS. The interval 97–99 is interaction with target base in tRNA; the sequence is NPD. The active-site Nucleophile is the Cys102. Residues Cys102 and Cys199 are joined by a disulfide bond. Gly127 serves as a coordination point for ATP. The interval 149–151 is interaction with tRNA; that stretch reads KDQ. The Cysteine persulfide intermediate role is filled by Cys199. The segment at 311–312 is interaction with tRNA; that stretch reads RY.

This sequence belongs to the MnmA/TRMU family. In terms of assembly, interacts with TusE.

The protein resides in the cytoplasm. The catalysed reaction is S-sulfanyl-L-cysteinyl-[protein] + uridine(34) in tRNA + AH2 + ATP = 2-thiouridine(34) in tRNA + L-cysteinyl-[protein] + A + AMP + diphosphate + H(+). Catalyzes the 2-thiolation of uridine at the wobble position (U34) of tRNA(Lys), tRNA(Glu) and tRNA(Gln), leading to the formation of s(2)U34, the first step of tRNA-mnm(5)s(2)U34 synthesis. Sulfur is provided by IscS, via a sulfur-relay system. Binds ATP and its substrate tRNAs. The sequence is that of tRNA-specific 2-thiouridylase MnmA from Buchnera aphidicola subsp. Schizaphis graminum (strain Sg).